We begin with the raw amino-acid sequence, 32 residues long: U13-ctenitoxin-Pn1a (32 aa).

Intrachain disulfides connect Cys-3-Cys-17, Cys-10-Cys-21, and Cys-16-Cys-30.

Expressed by the venom gland.

The protein localises to the secreted. Its function is as follows. Acts as a neurotoxin. The protein is U13-ctenitoxin-Pn1a of Phoneutria nigriventer (Brazilian armed spider).